A 62-amino-acid chain; its full sequence is Negative regulatory protein YxlE (62 aa).

Helical transmembrane passes span 7–27 and 37–57; these read MILPLIVLQLALAVFALISCI and WMWAAIIVCINIIGPILFFTV.

It is found in the cell membrane. Its function is as follows. Together with YxlD is important for negative regulation of sigma Y activity. This is Negative regulatory protein YxlE (yxlE) from Bacillus subtilis (strain 168).